The sequence spans 63 residues: Rubredoxin-2 (63 aa).

The Rubredoxin-like domain occupies 8 to 59 (YKLFRCLQCGFEYDEAIGWPDDGIEPGTRWDEIPEDWSCPDCGAAKVDFEMV). 4 residues coordinate Fe cation: Cys13, Cys16, Cys46, and Cys49.

The protein belongs to the rubredoxin family. Fe(3+) is required as a cofactor.

Functionally, involved in the hydrocarbon hydroxylating system, which transfers electrons from NADH to rubredoxin reductase and then through rubredoxin to alkane 1 monooxygenase. The sequence is that of Rubredoxin-2 (rubA2) from Rhodococcus erythropolis (Arthrobacter picolinophilus).